The primary structure comprises 510 residues: MQEPREQTLSQVNNPDASDEKPETSSLASNLSMSEEIMTCTDYIPRSSNDYTSQMYSAKPYAHILSVPVSETTYPGQTQYQTLQQSQPYAVYPQATQTYGLPPFASSTNASLIPTSSAIANIPAAAVASISNQDYPTYTILGQNQYQACYPSSSFGVTGQTNSDAETTTLAATTYQTEKPSAMVPAPATQRLPSDSSASPPLSQTTPNKDADDQARKNMTVKNRGKRKADASSSQDSELERVFLWDLDETIIIFHSLLTGSYAQKYGKDPTVVIGSGLTMEEMIFEVADTHLFFNDLEECDQVHVEDVASDDNGQDLSNYSFSTDGFSGSGGSGSHGSSVGVQGGVDWMRKLAFRYRKVREIYDKHKSNVGGLLSPQRKEALQRLRAEIEVLTDSWLGTALKSLLLIQSRKNCANVLITTTQLVPALAKVLLYGLGEIFPIENIYSATKIGKESCFERIVSRFGKKVTYVVIGDGRDEEIAAKQHNMPFWRITNHGDLVSLHQALELDFL.

Disordered regions lie at residues M1–S32 and Y175–S233. A compositionally biased stretch (polar residues) spans Q7–D16. The span at L192–S203 shows a compositional bias: low complexity. Phosphoserine is present on residues S199 and S203. D246 functions as the Nucleophile in the catalytic mechanism. 2 residues coordinate Mg(2+): D246 and D248. D248 functions as the Proton donor in the catalytic mechanism. A phosphoserine mark is found at S375 and S409. D474 serves as a coordination point for Mg(2+).

This sequence belongs to the HAD-like hydrolase superfamily. EYA family. As to quaternary structure, interacts with SIX1 and DACH1, and probably SIX2, SIX4 and SIX5. Mg(2+) serves as cofactor. In terms of processing, ser-203 phosphorylation is required for localization at sites of DNA damage and directing interaction with H2AX. Expressed in branchial arches, CNS and developing eye.

The protein resides in the cytoplasm. The protein localises to the nucleus. It carries out the reaction O-phospho-L-tyrosyl-[protein] + H2O = L-tyrosyl-[protein] + phosphate. In terms of biological role, tyrosine phosphatase that specifically dephosphorylates 'Tyr-142' of histone H2AX (H2AXY142ph). 'Tyr-142' phosphorylation of histone H2AX plays a central role in DNA repair and acts as a mark that distinguishes between apoptotic and repair responses to genotoxic stress. Promotes efficient DNA repair by dephosphorylating H2AX, promoting the recruitment of DNA repair complexes containing MDC1. Its function as histone phosphatase probably explains its role in transcription regulation during organogenesis. The phosphatase activity has been shown in vitro. Coactivates SIX1. Seems to coactivate SIX2, SIX4 and SIX5. The repression of precursor cell proliferation in myoblasts by SIX1 is switched to activation through recruitment of EYA3 to the SIX1-DACH1 complex and seems to be dependent on EYA3 phosphatase activity. May be involved in development of the eye. May play a role in mediating the induction and differentiation of cranial placodes. The sequence is that of Protein phosphatase EYA3 (Eya3) from Mus musculus (Mouse).